The following is a 657-amino-acid chain: Glycogen debranching enzyme (657 aa).

Aspartate 336 functions as the Nucleophile in the catalytic mechanism. Glutamate 371 (proton donor) is an active-site residue. The segment at alanine 460–isoleucine 479 is disordered.

Belongs to the glycosyl hydrolase 13 family.

It catalyses the reaction Hydrolysis of (1-&gt;6)-alpha-D-glucosidic linkages to branches with degrees of polymerization of three or four glucose residues in limit dextrin.. The protein operates within glycan degradation; glycogen degradation. Functionally, removes maltotriose and maltotetraose chains that are attached by 1,6-alpha-linkage to the limit dextrin main chain, generating a debranched limit dextrin. This chain is Glycogen debranching enzyme, found in Enterobacter sp. (strain 638).